A 343-amino-acid polypeptide reads, in one-letter code: Anthranilate phosphoribosyltransferase (343 aa).

5-phospho-alpha-D-ribose 1-diphosphate is bound by residues G84, 87 to 88 (GD), T92, 94 to 97 (NIST), 112 to 120 (KHGNRGVSS), and S124. G84 provides a ligand contact to anthranilate. S96 contacts Mg(2+). Residue N115 participates in anthranilate binding. R170 is an anthranilate binding site. Positions 229 and 230 each coordinate Mg(2+).

This sequence belongs to the anthranilate phosphoribosyltransferase family. As to quaternary structure, homodimer. Mg(2+) serves as cofactor.

The catalysed reaction is N-(5-phospho-beta-D-ribosyl)anthranilate + diphosphate = 5-phospho-alpha-D-ribose 1-diphosphate + anthranilate. It functions in the pathway amino-acid biosynthesis; L-tryptophan biosynthesis; L-tryptophan from chorismate: step 2/5. Its function is as follows. Catalyzes the transfer of the phosphoribosyl group of 5-phosphorylribose-1-pyrophosphate (PRPP) to anthranilate to yield N-(5'-phosphoribosyl)-anthranilate (PRA). The chain is Anthranilate phosphoribosyltransferase from Burkholderia pseudomallei (strain 1106a).